The chain runs to 676 residues: Hemin receptor (676 aa).

The signal sequence occupies residues 1 to 28; the sequence is MLRSTSDRFRWSSLSLAIACTLPLATQA. The TonB box signature appears at 44-51; the sequence is DTMVVTAT. A TBDR plug domain is found at 56-167; sequence SSFEAPMMVT…LGGVIAYETV (112 aa). The 499-residue stretch at 178 to 676 folds into the TBDR beta-barrel domain; sequence NSGYRVYSSA…NVKFFVSYQW (499 aa). A TonB C-terminal box motif is present at residues 659–676; the sequence is QGIPQDGRNVKFFVSYQW.

The protein belongs to the TonB-dependent receptor family.

The protein localises to the cell outer membrane. Functionally, this protein is involved in the initial step of iron uptake by binding hemin, an iron chelatin siderophore that allows the bacteria to extract iron from the environment. The polypeptide is Hemin receptor (hmuR) (Yersinia pestis).